A 154-amino-acid polypeptide reads, in one-letter code: Mitochondrial fission 1 protein (154 aa).

Residues 1–124 lie on the Cytoplasmic side of the membrane; that stretch reads MEDLLNEVVP…KEIDKEVAKG (124 aa). The chain crosses the membrane as a helical span at residues 125–145; that stretch reads MVVAGGAALVLGGILGLGIAM. The Mitochondrial intermembrane segment spans residues 146–154; the sequence is ARNKQKREK.

This sequence belongs to the FIS1 family.

The protein localises to the mitochondrion outer membrane. Involved in the fragmentation of the mitochondrial network and its perinuclear clustering. Functions downstream of Pink1 and upstream of Drp1 to regulate mitochondrial fission. The chain is Mitochondrial fission 1 protein from Drosophila melanogaster (Fruit fly).